A 132-amino-acid chain; its full sequence is MTLNLCVLTPNRIVWDSEVKEIILSTNSGQIGVLANHAPIATAVDIGILKIRLANQWLTMALMGGFARIGNNEITILVNDAEKNSDIDPQEAQQTLEIAEANLRKAEGKRQTIEANLALRRARTRVEALNTI.

Thr-2 is modified (N-acetylthreonine).

The protein belongs to the ATPase epsilon chain family. As to quaternary structure, F-type ATPases have 2 components, CF(1) - the catalytic core - and CF(0) - the membrane proton channel. CF(1) has five subunits: alpha(3), beta(3), gamma(1), delta(1), epsilon(1). CF(0) has three main subunits: a, b and c.

It is found in the plastid. It localises to the chloroplast thylakoid membrane. In terms of biological role, produces ATP from ADP in the presence of a proton gradient across the membrane. The sequence is that of ATP synthase epsilon chain, chloroplastic from Arabidopsis thaliana (Mouse-ear cress).